A 169-amino-acid chain; its full sequence is uncharacterized protein (169 aa).

Residues 18–79 form the HTH asnC-type domain; sequence LDRADVALLN…IVSPKAVGRP (62 aa). A DNA-binding region (H-T-H motif) is located at residues 37 to 56; the sequence is SEELADKVGLSPTACQRRLK.

This is an uncharacterized protein from Sinorhizobium fredii (strain NBRC 101917 / NGR234).